Reading from the N-terminus, the 565-residue chain is Thiol:disulfide interchange protein DsbD (565 aa).

Residues 1 to 19 (MAQRIFTLILLLCSTSVFA) form the signal peptide. Intrachain disulfides connect cysteine 122–cysteine 128 and cysteine 182–cysteine 304. The next 7 helical transmembrane spans lie at 163–183 (LPFS…TPCV), 208–228 (LLTF…GLVV), 243–263 (YVLI…FGLF), 296–316 (IAGL…LLYI), 323–343 (WLGG…LMLI), 357–377 (WMEQ…VFLL), and 384–404 (VWGL…AFIT). Positions 434–565 (WAFGATHTAQ…FSAHLRDRQP (132 aa)) constitute a Thioredoxin domain. Cysteine 480 and cysteine 483 are joined by a disulfide.

The protein belongs to the thioredoxin family. DsbD subfamily.

Its subcellular location is the cell inner membrane. It catalyses the reaction [protein]-dithiol + NAD(+) = [protein]-disulfide + NADH + H(+). The enzyme catalyses [protein]-dithiol + NADP(+) = [protein]-disulfide + NADPH + H(+). Functionally, required to facilitate the formation of correct disulfide bonds in some periplasmic proteins and for the assembly of the periplasmic c-type cytochromes. Acts by transferring electrons from cytoplasmic thioredoxin to the periplasm. This transfer involves a cascade of disulfide bond formation and reduction steps. The chain is Thiol:disulfide interchange protein DsbD from Shigella boydii serotype 4 (strain Sb227).